We begin with the raw amino-acid sequence, 182 residues long: tRNA-splicing endonuclease (182 aa).

Catalysis depends on residues tyrosine 119, histidine 127, and lysine 158.

This sequence belongs to the tRNA-intron endonuclease family. Archaeal short subfamily. As to quaternary structure, homotetramer; although the tetramer contains four active sites, only two participate in the cleavage. Therefore, it should be considered as a dimer of dimers.

The enzyme catalyses pretRNA = a 3'-half-tRNA molecule with a 5'-OH end + a 5'-half-tRNA molecule with a 2',3'-cyclic phosphate end + an intron with a 2',3'-cyclic phosphate and a 5'-hydroxyl terminus.. Endonuclease that removes tRNA introns. Cleaves pre-tRNA at the 5'- and 3'-splice sites to release the intron. The products are an intron and two tRNA half-molecules bearing 2',3' cyclic phosphate and 5'-OH termini. Recognizes a pseudosymmetric substrate in which 2 bulged loops of 3 bases are separated by a stem of 4 bp. This chain is tRNA-splicing endonuclease, found in Saccharolobus islandicus (strain M.14.25 / Kamchatka #1) (Sulfolobus islandicus).